Reading from the N-terminus, the 140-residue chain is Class I hydrophobin 1 (140 aa).

The first 18 residues, Met-1–Ala-18, serve as a signal peptide directing secretion. The tract at residues Ala-22 to Thr-60 is disordered. 4 disulfide bridges follow: Cys-58–Cys-119, Cys-65–Cys-113, Cys-66–Cys-99, and Cys-120–Cys-133.

It belongs to the fungal hydrophobin family. As to quaternary structure, self-assembles to form functional amyloid fibrils called rodlets. Self-assembly into fibrillar rodlets occurs spontaneously at hydrophobic:hydrophilic interfaces and the rodlets further associate laterally to form amphipathic monolayers.

It localises to the secreted. It is found in the cell wall. Aerial growth, conidiation, and dispersal of filamentous fungi in the environment rely upon a capability of their secreting small amphipathic proteins called hydrophobins (HPBs) with low sequence identity. Class I can self-assemble into an outermost layer of rodlet bundles on aerial cell surfaces, conferring cellular hydrophobicity that supports fungal growth, development and dispersal; whereas Class II form highly ordered films at water-air interfaces through intermolecular interactions but contribute nothing to the rodlet structure. This is Class I hydrophobin 1 from Pisolithus tinctorius (Dead man's foot).